We begin with the raw amino-acid sequence, 325 residues long: E3 ubiquitin-protein ligase SIAH2 (325 aa).

Over residues 1–15 (MSRPSSTGPSANKPC) the composition is skewed to polar residues. The disordered stretch occupies residues 1–43 (MSRPSSTGPSANKPCSKQPPPPQTPHAPSPAAPPAAATISAAG). Residue serine 6 is modified to Phosphoserine. The residue at position 16 (serine 16) is a Phosphoserine; by DYRK2. Pro residues predominate over residues 17 to 33 (KQPPPPQTPHAPSPAAP). Threonine 24 carries the post-translational modification Phosphothreonine; by MAPK14. Serine 29 bears the Phosphoserine; by DYRK2 and MAPK14 mark. Residues 34–43 (PAAATISAAG) show a composition bias toward low complexity. Position 69 is a phosphoserine; by DYRK2 (serine 69). An RING-type zinc finger spans residues 81-116 (CPVCFDYVLPPILQCQAGHLVCNQCRQKLSCCPTCR). Threonine 120 carries the phosphothreonine; by DYRK2 modification. The segment at 131-323 (VASAVLFPCK…LGINVTISTC (193 aa)) is SBD. Residues 134-194 (AVLFPCKYAT…VMSHLMHAHK (61 aa)) form an SIAH-type zinc finger. Positions 139, 146, 158, 162, 169, 176, 188, and 193 each coordinate Zn(2+).

The protein belongs to the SINA (Seven in absentia) family. In terms of assembly, homodimer. Interacts with UBE2E2. Interacts with VAV1, without mediating its ubiquitin-mediated degradation. Interacts with CACYBP/SIP. Probable component of some large E3 complex possibly composed of UBE2D1, SIAH2, CACYBP/SIP, SKP1, APC and TBL1X. Interacts with UBE2I. Interacts with PEG10, which may inhibit its activity. Interacts with EGLN2 and SNCAIP. Interacts with DYRK2. Interacts with PEG3. Interacts with NR1D1 and NR1D2. Interacts with DCC. Interacts with AXIN1. In terms of processing, phosphorylated at Ser-29 by DYRK2; this increases the ubiquitin ligase activity and promotes degradation of EGLN3. Phosphorylated at Thr-24 and Ser-29 by MAPK14, which mediates the degradation by the proteasome of EGLN3. In terms of tissue distribution, widely expressed at low level in embryos and adults. Expressed in a specific population of germ cells within both the mouse ovary and testis. Absent in primordial oocytes but expressed in all growing oocytes, coincident with their recruitment from the pool of quiescent cells. Its level of expression increases as the oocytes mature. Expressed in Graafian follicles and in fertilized zygotes up until the two cell stage, a time of extensive maternal transcript degradation and zygotic gene activation. Expressed in the testis from postmeiotic spermatids.

The protein localises to the cytoplasm. The protein resides in the nucleus. It catalyses the reaction S-ubiquitinyl-[E2 ubiquitin-conjugating enzyme]-L-cysteine + [acceptor protein]-L-lysine = [E2 ubiquitin-conjugating enzyme]-L-cysteine + N(6)-ubiquitinyl-[acceptor protein]-L-lysine.. Its pathway is protein modification; protein ubiquitination. In terms of biological role, E3 ubiquitin-protein ligase that mediates ubiquitination and subsequent proteasomal degradation of target proteins. E3 ubiquitin ligases accept ubiquitin from an E2 ubiquitin-conjugating enzyme in the form of a thioester and then directly transfers the ubiquitin to targeted substrates. Mediates E3 ubiquitin ligase activity either through direct binding to substrates or by functioning as the essential RING domain subunit of larger E3 complexes. Mediates ubiquitination and proteasomal degradation of DYRK2 in response to hypoxia. Promotes monoubiquitination of SNCA. Triggers the ubiquitin-mediated degradation of many substrates, including proteins involved in transcription regulation (GPS2, POU2AF1, PML, NCOR1), a cell surface receptor (DCC), an antiapoptotic protein (BAG1), and a protein involved in synaptic vesicle function in neurons (SYP). It is thereby involved in apoptosis, tumor suppression, cell cycle, transcription and signaling processes. Has some overlapping function with SIAH1. Triggers the ubiquitin-mediated degradation of TRAF2, whereas SIAH1 does not. Regulates cellular clock function via ubiquitination of the circadian transcriptional repressors NR1D1 and NR1D2 leading to their proteasomal degradation. Plays an important role in mediating the rhythmic degradation/clearance of NR1D1 and NR1D2 contributing to their circadian profile of protein abundance. Mediates ubiquitination and degradation of EGLN2 and EGLN3 in response to the unfolded protein response (UPR), leading to their degradation and subsequent stabilization of ATF4. Also part of the Wnt signaling pathway in which it mediates the Wnt-induced ubiquitin-mediated proteasomal degradation of AXIN1. The polypeptide is E3 ubiquitin-protein ligase SIAH2 (Siah2) (Mus musculus (Mouse)).